The chain runs to 301 residues: Glycosyltransferase GlyG (301 aa).

The protein belongs to the glycosyltransferase 2 family.

Its pathway is protein modification; protein glycosylation. In terms of biological role, involved in the polymorphic O-glycosylation of the serine-rich repeat protein PsrP. Catalyzes the third step in glycosylation PsrP in this bacteria. Transfers glucose from UDP-glucose to the terminal glucose moiety of already-glycosylated PsrP (using truncated substrates with PsrP SSR1-GlcNAc-Glc). Has a marked preference for PsrP substrate that has already been modified by GlcNAc and glucose. In vitro has hydrolytic activity against UDP-glucose and to a lesser extent against UDP-galactose. Also catalyzes the fourth step in glycosylation of the serine-rich repeat protein PsrP in this bacteria. Can transfer the sugar from UDP-glucose (and much less well from UDP-galactose) to the terminal sugar moiety of PsrP-GlcNAc-Glc-Gal or of PsrP-GlcNAc-Glc-Glc. The protein is Glycosyltransferase GlyG of Streptococcus pneumoniae serotype 4 (strain ATCC BAA-334 / TIGR4).